Consider the following 932-residue polypeptide: Progesterone receptor (932 aa).

The interval 1 to 164 is AF3; mediates transcriptional activation; that stretch reads MTELKAKGPR…PATQGVLSPL (164 aa). Positions 1-254 are disordered; sequence MTELKAKGPR…GGAAAGGAAA (254 aa). Residues 1-565 are modulating, Pro-Rich; sequence MTELKAKGPR…YSFESLPQKI (565 aa). S20 bears the Phosphoserine mark. Positions 55–59 match the LXXL motif 1 motif; the sequence is LDGLL. S81 carries the post-translational modification Phosphoserine. Over residues 88 to 103 the composition is skewed to low complexity; the sequence is SRAEATRGAGGSSSSP. An LXXL motif 2 motif is present at residues 115-119; that stretch reads LDTLL. 2 positions are modified to phosphoserine: S130 and S162. The interval 165–304 is mediates transcriptional transrepression; the sequence is MSRSGGKAGD…LATTVMDFIH (140 aa). A Nuclear localization signal motif is present at residues 183–187; the sequence is KVLPQ. S190 and S213 each carry phosphoserine. The segment covering 220–231 has biased composition (acidic residues); that stretch reads EVEEEDGSESED. The segment covering 232–254 has biased composition (low complexity); that stretch reads SAGPLLKGKPRALGGAAAGGAAA. Position 293 is a phosphoserine; by MAPK1 (S293). The span at 334–349 shows a compositional bias: low complexity; that stretch reads AASAFAPPRSSPSASS. The interval 334–356 is disordered; it reads AASAFAPPRSSPSASSTPVAVGD. A Phosphoserine; by MAPK modification is found at S344. K387 is covalently cross-linked (Glycyl lysine isopeptide (Lys-Gly) (interchain with G-Cter in SUMO); alternate). Residue K387 forms a Glycyl lysine isopeptide (Lys-Gly) (interchain with G-Cter in ubiquitin); alternate linkage. 2 disordered regions span residues 414 to 451 and 468 to 499; these read PDFP…SSAS and PPQQ…STAA. A compositionally biased stretch (pro residues) spans 417–432; sequence PLGPPPPLPPRAPPSR. The segment covering 433 to 451 has biased composition (low complexity); that stretch reads PGEAAVTAAPASASVSSAS. The tract at residues 455-545 is AF1; mediates transcriptional activation; the sequence is STLECILYKA…VYPPYLNYLR (91 aa). A compositionally biased stretch (pro residues) spans 470-480; sequence QQGPFAPPPSK. A Glycyl lysine isopeptide (Lys-Gly) (interchain with G-Cter in SUMO) cross-link involves residue K530. NR C4-type zinc fingers lie at residues 566–586 and 602–626; these read CLIC…CGSC and CAGR…LRKC. The segment at residues 566-638 is a DNA-binding region (nuclear receptor); the sequence is CLICGDEASG…AGMVLGGRKF (73 aa). Residue S675 is modified to Phosphoserine. One can recognise an NR LBD domain in the interval 678–912; the sequence is QDIQLIPPLI…EFPEMMSEVI (235 aa). The AF2; mediates transcriptional activation stretch occupies residues 686 to 932; that stretch reads LINLLMSIEP…MVKPLLFHKK (247 aa). R765 contributes to the progesterone binding site.

This sequence belongs to the nuclear hormone receptor family. As to quaternary structure, interacts with SMARD1 and UNC45A. Interacts with CUEDC2; the interaction promotes ubiquitination, decreases sumoylation, and represses transcriptional activity. Interacts with PIAS3; the interaction promotes sumoylation of PR in a hormone-dependent manner, inhibits DNA-binding, and alters nuclear export. Interacts with SP1; the interaction requires ligand-induced phosphorylation on Ser-344 by ERK1/2-MAPK. Interacts with PRMT2. Interacts with NCOA2 and NCOA1. Interacts with KLF9. Interacts with GTF2B. In terms of processing, phosphorylated on multiple serine sites. Several of these sites are hormone-dependent. Phosphorylation on Ser-293 is highly hormone-dependent and modulates ubiquitination and sumoylation on Lys-387. Phosphorylation on Ser-102 and Ser-344 also requires induction by hormone. Basal phosphorylation on Ser-81, Ser-162 and Ser-190 is increased in response to progesterone and can be phosphorylated in vitro by the CDK2-A1 complex. Phosphorylation at Ser-162 and Ser-293, but not at Ser-190, is impaired during the G(2)/M phase of the cell cycle. Phosphorylation on Ser-344 by ERK1/2 MAPK is required for interaction with SP1. Sumoylation is hormone-dependent and represses transcriptional activity. Sumoylation on all three sites is enhanced by PIAS3. Desumoylated by SENP1. Sumoylation on Lys-387, the main site of sumoylation, is repressed by ubiquitination on the same site, and modulated by phosphorylation at Ser-293. Post-translationally, ubiquitination is hormone-dependent and represses sumoylation on the same site. Promoted by MAPK-mediated phosphorylation on Ser-293. Ubiquitinated by UBR5, leading to its degradation: UBR5 specifically recognizes and binds ligand-bound PGR when it is not associated with coactivators (NCOAs). In presence of NCOAs, the UBR5-degron is not accessible, preventing its ubiquitination and degradation. In terms of processing, palmitoylated by ZDHHC7 and ZDHHC21. Palmitoylation is required for plasma membrane targeting and for rapid intracellular signaling via ERK and AKT kinases and cAMP generation.

It is found in the nucleus. It localises to the cytoplasm. The steroid hormones and their receptors are involved in the regulation of eukaryotic gene expression and affect cellular proliferation and differentiation in target tissues. Transcriptional activator of several progesteron-dependent promoters in a variety of cell types. Involved in activation of SRC-dependent MAPK signaling on hormone stimulation. This chain is Progesterone receptor (PGR), found in Hylobates lar (Lar gibbon).